Reading from the N-terminus, the 1225-residue chain is DNA-directed RNA polymerase subunit beta' (1225 aa).

Zn(2+) is bound by residues Cys60, Cys62, Cys75, and Cys78. Mg(2+) is bound by residues Asp450, Asp452, and Asp454. Residues Cys818, Cys892, Cys899, and Cys902 each coordinate Zn(2+).

It belongs to the RNA polymerase beta' chain family. The RNAP catalytic core consists of 2 alpha, 1 beta, 1 beta' and 1 omega subunit. When a sigma factor is associated with the core the holoenzyme is formed, which can initiate transcription. The cofactor is Mg(2+). It depends on Zn(2+) as a cofactor.

It catalyses the reaction RNA(n) + a ribonucleoside 5'-triphosphate = RNA(n+1) + diphosphate. DNA-dependent RNA polymerase catalyzes the transcription of DNA into RNA using the four ribonucleoside triphosphates as substrates. The protein is DNA-directed RNA polymerase subunit beta' of Streptococcus pneumoniae (strain ATCC 700669 / Spain 23F-1).